Consider the following 916-residue polypeptide: Isoleucine--tRNA ligase (916 aa).

The 'HIGH' region signature appears at 58-68 (PYANGHLHIGH). E568 lines the L-isoleucyl-5'-AMP pocket. The short motif at 609-613 (KMSKS) is the 'KMSKS' region element. K612 is an ATP binding site. Zn(2+) contacts are provided by C891, C894, C906, and C909.

The protein belongs to the class-I aminoacyl-tRNA synthetase family. IleS type 1 subfamily. As to quaternary structure, monomer. It depends on Zn(2+) as a cofactor.

Its subcellular location is the cytoplasm. The catalysed reaction is tRNA(Ile) + L-isoleucine + ATP = L-isoleucyl-tRNA(Ile) + AMP + diphosphate. Its function is as follows. Catalyzes the attachment of isoleucine to tRNA(Ile). As IleRS can inadvertently accommodate and process structurally similar amino acids such as valine, to avoid such errors it has two additional distinct tRNA(Ile)-dependent editing activities. One activity is designated as 'pretransfer' editing and involves the hydrolysis of activated Val-AMP. The other activity is designated 'posttransfer' editing and involves deacylation of mischarged Val-tRNA(Ile). In Campylobacter fetus subsp. fetus (strain 82-40), this protein is Isoleucine--tRNA ligase.